The primary structure comprises 390 residues: S-adenosylmethionine synthase 2 (390 aa).

Residue Glu-9 coordinates Mg(2+). His-15 lines the ATP pocket. Glu-43 serves as a coordination point for K(+). L-methionine contacts are provided by Glu-56 and Gln-99. ATP is bound by residues 167-169 (DGK), 235-238 (SGRF), Asp-246, 252-253 (RK), Ala-269, Lys-273, and Lys-277. Asp-246 serves as a coordination point for L-methionine. Lys-277 serves as a coordination point for L-methionine.

Belongs to the AdoMet synthase family. As to quaternary structure, homotetramer. Mn(2+) serves as cofactor. Mg(2+) is required as a cofactor. The cofactor is Co(2+). Requires K(+) as cofactor.

Its subcellular location is the cytoplasm. The enzyme catalyses L-methionine + ATP + H2O = S-adenosyl-L-methionine + phosphate + diphosphate. It functions in the pathway amino-acid biosynthesis; S-adenosyl-L-methionine biosynthesis; S-adenosyl-L-methionine from L-methionine: step 1/1. In terms of biological role, catalyzes the formation of S-adenosylmethionine from methionine and ATP. The reaction comprises two steps that are both catalyzed by the same enzyme: formation of S-adenosylmethionine (AdoMet) and triphosphate, and subsequent hydrolysis of the triphosphate. The sequence is that of S-adenosylmethionine synthase 2 (SAM2) from Actinidia chinensis var. chinensis (Chinese soft-hair kiwi).